An 87-amino-acid chain; its full sequence is uncharacterized protein (87 aa).

Residues 13 to 33 (LMIVSAVFGGIGIITTIVFVI) form a helical membrane-spanning segment. Residues 66–87 (EECGGSTETSSSKPKKKAKKEV) form a disordered region. A compositionally biased stretch (basic residues) spans 78-87 (KPKKKAKKEV).

The protein resides in the membrane. This is an uncharacterized protein from Caenorhabditis elegans.